Here is an 85-residue protein sequence, read N- to C-terminus: Large ribosomal subunit protein bL27 (85 aa).

This sequence belongs to the bacterial ribosomal protein bL27 family.

This is Large ribosomal subunit protein bL27 from Ruthia magnifica subsp. Calyptogena magnifica.